We begin with the raw amino-acid sequence, 1090 residues long: Nitrogen assimilation transcription factor nit-4 (1090 aa).

The segment covering 1 to 14 (MNSSDVQMMSSQDA) has biased composition (polar residues). The segment at 1–43 (MNSSDVQMMSSQDAPGSAGLAPDNIASSLPSKKKSRRGADPTN) is disordered. The segment at residues 53–81 (CIACRRRKSKCDGALPSCAACASVYGTEC) is a DNA-binding region (zn(2)-C6 fungal-type). Disordered stretches follow at residues 145-176 (RRDE…SQAV), 666-689 (FSTS…PAPP), 773-798 (HQHH…YQQQ), 825-875 (GIPT…VKPP), 936-999 (QGWD…QRQQ), and 1033-1053 (HGAE…TTVG). The segment covering 167-176 (GRDDATSQAV) has biased composition (basic and acidic residues). Residues 666–677 (FSTSEVPSPNRT) are compositionally biased toward polar residues. Low complexity predominate over residues 849–859 (QPQQQQQPQAQ). Gly residues-rich tracts occupy residues 940-965 (LEGG…GGAG) and 976-988 (NIGG…GGST). Over residues 990–999 (QRQQQQQRQQ) the composition is skewed to low complexity.

The protein localises to the nucleus. Functionally, pathway-specific regulatory gene of nitrate assimilation; it activates the transcription of the genes for nitrate and nitrite reductases. The polypeptide is Nitrogen assimilation transcription factor nit-4 (nit-4) (Neurospora crassa (strain ATCC 24698 / 74-OR23-1A / CBS 708.71 / DSM 1257 / FGSC 987)).